The sequence spans 510 residues: Lysine-specific demethylase 4D (510 aa).

Residues 15-57 form the JmjN domain; sequence IMIFRPTKEEFNDFDKYIAYMESQGAHRAGLAKVIPPKEWRAR. Residues E23 and E24 each carry the polyADP-ribosyl glutamic acid modification. 2-oxoglutarate is bound at residue Y133. Residues 143-309 form the JmjC domain; sequence DGKTQQWNVG…YGKVASQCSC (167 aa). Fe cation-binding residues include H189 and E191. N199 and K207 together coordinate 2-oxoglutarate. Residues C235 and H241 each contribute to the Zn(2+) site. Position 242 (K242) interacts with 2-oxoglutarate. H277 is a binding site for Fe cation. Residues C307 and C309 each contribute to the Zn(2+) site. Positions 397–510 are disordered; it reads MCHTSRQAAD…ASEGGLTSDP (114 aa). Residues 461–471 are compositionally biased toward basic and acidic residues; sequence RLPEGRDDRSP.

The protein belongs to the JHDM3 histone demethylase family. Fe(2+) is required as a cofactor. Ubiquitinated via 'Lys-63'-linked ubiquitin chains. Deubiquitinated by USP14 with the help of TRIM14 leading to stabilization.

It localises to the nucleus. It carries out the reaction N(6),N(6),N(6)-trimethyl-L-lysyl(9)-[histone H3] + 2 2-oxoglutarate + 2 O2 = N(6)-methyl-L-lysyl(9)-[histone H3] + 2 formaldehyde + 2 succinate + 2 CO2. Its function is as follows. Histone demethylase that specifically demethylates 'Lys-9' of histone H3, thereby playing a central role in histone code. Does not demethylate histone H3 'Lys-4', H3 'Lys-27', H3 'Lys-36' nor H4 'Lys-20'. Demethylates both di- and trimethylated H3 'Lys-9' residue, while it has no activity on monomethylated residues. Demethylation of Lys residue generates formaldehyde and succinate. The chain is Lysine-specific demethylase 4D (Kdm4d) from Rattus norvegicus (Rat).